The sequence spans 65 residues: Large ribosomal subunit protein bL33c (65 aa).

It belongs to the bacterial ribosomal protein bL33 family.

It is found in the plastid. This chain is Large ribosomal subunit protein bL33c, found in Aneura mirabilis (Parasitic liverwort).